The following is a 712-amino-acid chain: Capsid protein (712 aa).

2 disordered regions span residues 614-633 (LTSTEEGSPQKKKRRDKEVR) and 646-665 (CWMSPTPETPPKAGKTPESS). The stretch at 670–706 (YDNHTKLAKRVKKEIHNQNRRHRLLLAHLRRERDRLL) forms a coiled coil.

This sequence belongs to the anelloviridae capsid protein family.

The protein localises to the virion. Its function is as follows. Self-assembles to form an icosahedral capsid with a T=1 symmetry, about 30 nm in diameter, and consisting of 60 capsid proteins. The capsid encapsulates the genomic DNA. Capsid protein is involved in attachment and entry into the host cell. In Torque teno tamarin virus (isolate So-TTV2), this protein is Capsid protein.